Reading from the N-terminus, the 1362-residue chain is MGQGVLRGEGHPNNNPNSKVGWKSLVGIITIFMLILCDQSDGKICYSMDIRNNISQFSMLEDCTVIEGHLQILLMFTSKPENFRGLRFPKLTTITDYLLLFRVYGLESLKDLFPNLTVIRGTRLFFNYALVIFEMVHXKEIGLYNLMNITRGSVRIEKNNELCYLSTIDWSIILDSVEDNYIELNRDNKEECGDVCPGTVKGKSKCKHTLVNGALVERCWTQDHCQKVCPSDCKGSGCLPDGQCCHPECLGSCRKPNDPSECTACRHFQNEGVCVTACPKGSYQFQGWRCIDFNTCQELNSRCQNSRDNSCPPYVIHKGECMPDCPSGYIANSTTRTCTPCAGPCPKVCTIFQNVKTIDSVTSAQELRGCTVINGSLIINLRGGNNIATELEANLGLIEEISGYLKIRRSYALVSLSFFRKLRLIRGEVLEAGNYSFYALDNPSLRQLWDWHKHNLTIIHGKLFFHHNPRLCLSQIHQMEEVTGTKGRQDKNDIATKTNGDQASCEDNLLTFNFIKTSHDMVLLRWDAYWPPDYRDLLGFMVHYKEAPFQNVTEFDGQDACGSNSWTVVDMDAPERSADGKTQSPGCLLRSLKPWTQYAVFVKTLVSGSDEGRTYGAKSKIIYIRTNETIPSVPLDPFSVSNSTSQIILKWKPPSEPNGNVTHYLVYWQEQPEDSDLYEVDYCNKGLKLPSRTWTPPTEIDENGNENQTEHTSVNKCCPCPKTEFQIQKEQDESAFRKTFENYLHNEVFIPRPVRKRRDLFGVANGTLPDPVTAPPLFNVSSTRAPDEPEPKIYSQKVWFKESVLISGLKHFTGYRIEIHACNHELSMGCSVAAYVNARTMPEATADKVVGPITYEYVEPNIIHLKWQEPKDPNGLIVLYEVHYSRVGGIEEVITCVSQKQYNTDKGGKLRVLTPGNYSVKIRATSLAGNGSWTEQAYFQVPDHPHSNIVKIITGPIIAVFLLLIVLVYCVVQKKKDAEGPAGPLYTSSNPEYLSASEVYIPDEWEVPRDKINLLRELGQGSFGMVYEGIAKDIIKGEPEVRVAVKTVNESASLRERIEFLNEASVMKAFNCHHVVRLLGVVSKGQPTLVIMELMAHGDLKSYLRSLRPDAENNPGRLAPTLKEIIQMAAEISDGMAYLNAKKFVHRDLAARNCMVADDYAVKIGDFGMTRDIYETDYYRKGGKGLLPVRWMSPESLKDGVFTAFSDVWSFGVVLWEITSLAEQPYQGLSNEQVLKFVMDGGSLDHPENCPPRLHSLMQMCWQYNPKMRPTFLEIIDMLKDDLRPSFQDVSFYYSDENKPPETDDLEIDFENMESTPLDPSSCSLRDQSSRTNIYEEHIPYTHMNGGRKNGRILSLPRSSPS.

An N-terminal signal peptide occupies residues 1–37 (MGQGVLRGEGHPNNNPNSKVGWKSLVGIITIFMLILC). The interval 38-184 (DQSDGKICYS…DSVEDNYIEL (147 aa)) is leucine-rich region. Cys-45 and Cys-63 are disulfide-bonded. N-linked (GlcNAc...) asparagine glycosylation is found at Asn-53, Asn-115, and Asn-148. 14 cysteine pairs are disulfide-bonded: Cys-163/Cys-192, Cys-196/Cys-219, Cys-206/Cys-225, Cys-229/Cys-238, Cys-233/Cys-244, Cys-245/Cys-253, Cys-249/Cys-262, Cys-265/Cys-274, Cys-278/Cys-290, Cys-296/Cys-321, Cys-303/Cys-311, Cys-325/Cys-338, Cys-341/Cys-345, and Cys-349/Cys-370. The N-linked (GlcNAc...) asparagine glycan is linked to Asn-332. 3 N-linked (GlcNAc...) asparagine glycosylation sites follow: Asn-374, Asn-434, and Asn-455. Cys-472 and Cys-505 form a disulfide bridge. Fibronectin type-III domains lie at 508 to 629 (NLLT…TNET) and 633 to 730 (VPLD…IQKE). 5 N-linked (GlcNAc...) asparagine glycosylation sites follow: Asn-551, Asn-627, Asn-642, Asn-660, and Asn-707. 2 disulfides stabilise this stretch: Cys-683–Cys-896 and Cys-822–Cys-830. Residues 694-714 (WTPPTEIDENGNENQTEHTSV) form a disordered region. Polar residues predominate over residues 705-714 (NENQTEHTSV). The tract at residues 741–749 (ENYLHNEVF) is insulin-binding. The Extracellular portion of the chain corresponds to 759–951 (DLFGVANGTL…PDHPHSNIVK (193 aa)). N-linked (GlcNAc...) asparagine glycans are attached at residues Asn-765 and Asn-779. Residues 849-944 (VVGPITYEYV…EQAYFQVPDH (96 aa)) enclose the Fibronectin type-III 3 domain. N-linked (GlcNAc...) asparagine glycans are attached at residues Asn-917 and Asn-930. A helical membrane pass occupies residues 952–972 (IITGPIIAVFLLLIVLVYCVV). Residues 973–1362 (QKKKDAEGPA…ILSLPRSSPS (390 aa)) are Cytoplasmic-facing. The residue at position 993 (Tyr-993) is a Phosphotyrosine; by autocatalysis. Residues 1012 to 1287 (INLLRELGQG…MLKDDLRPSF (276 aa)) enclose the Protein kinase domain. Residues Ser-1022, Lys-1046, and 1093 to 1099 (ELMAHGD) each bind ATP. Asp-1148 serves as the catalytic Proton donor/acceptor. ATP contacts are provided by residues 1152-1153 (RN) and Asp-1166. 5 positions are modified to phosphotyrosine; by autocatalysis: Tyr-1174, Tyr-1178, Tyr-1179, Tyr-1335, and Tyr-1341.

The protein belongs to the protein kinase superfamily. Tyr protein kinase family. Insulin receptor subfamily. Tetramer of 2 alpha and 2 beta chains linked by disulfide bonds. The alpha chains contribute to the formation of the ligand-binding domain, while the beta chains carry the kinase domain. In terms of processing, autophosphorylated on tyrosine residues in response to insulin. In terms of tissue distribution, localized mainly to the envelope in oocytes. Localized to the animal hemisphere during early embryonic cleavage. Expressed during organogenesis in regions of ecto- and mesodermic origins. Expressed in the entire encephalon, the otic and optic vesicles, the gills, the somites and the pronephric tubules of the embryo. Also found in adult liver, muscle and regenerated forelimbs.

The protein localises to the cell membrane. The catalysed reaction is L-tyrosyl-[protein] + ATP = O-phospho-L-tyrosyl-[protein] + ADP + H(+). With respect to regulation, autophosphorylation activates the kinase activity. Its function is as follows. Receptor tyrosine kinase which mediates actions of insulin. May be required for forelimb regeneration. The protein is Insulin receptor (insr) of Xenopus laevis (African clawed frog).